The primary structure comprises 4660 residues: Low-density lipoprotein receptor-related protein 2 (4660 aa).

The first 25 residues, 1-25, serve as a signal peptide directing secretion; the sequence is MERGAAAAAWMLLLAIAACLEPVSS. Residues 26 to 4425 are Extracellular-facing; sequence QECGSGNFRC…LSRGIPPGTT (4400 aa). 6 consecutive LDL-receptor class A domains span residues 27-63, 66-104, 107-143, 141-180, 182-218, and 221-257; these read ECGSGNFRCDNGYCIPASWRCDGTRDCLDDTDEIGCP, SCESGLFLCPAEGTCIPSSWVCDEDKDCSDGADEQQNCA, TCSAQQMTCSNGQCIPSEYRCDHVSDCPDGSDERNCH, NCHYPTCDQLTCANGACYNTSQRCDQKVDCRDSSDEANCT, LCSQKEFECGSGECILRAYVCDHDNDCEDNSDERNCN, and TCGGHQFTCSNGQCINQNWVCDGDDDCQDSGDEDGCE. 18 disulfides stabilise this stretch: cysteine 28/cysteine 40, cysteine 35/cysteine 53, cysteine 47/cysteine 62, cysteine 67/cysteine 80, cysteine 74/cysteine 93, cysteine 87/cysteine 103, cysteine 108/cysteine 120, cysteine 115/cysteine 133, cysteine 127/cysteine 142, cysteine 142/cysteine 157, cysteine 152/cysteine 170, cysteine 164/cysteine 179, cysteine 183/cysteine 195, cysteine 190/cysteine 208, cysteine 202/cysteine 217, cysteine 222/cysteine 234, cysteine 229/cysteine 247, and cysteine 241/cysteine 256. N-linked (GlcNAc...) asparagine glycans are attached at residues asparagine 159 and asparagine 178. A glycan (N-linked (GlcNAc...) asparagine) is linked at asparagine 259. The LDL-receptor class A 7 domain occupies 264 to 307; that stretch reads RCYPREWACPGSGRCISIDKVCDGVPDCPEGDDENNVTSGRTCG. 3 disulfide bridges follow: cysteine 265–cysteine 278, cysteine 272–cysteine 291, and cysteine 285–cysteine 306. Asparagine 299 and asparagine 340 each carry an N-linked (GlcNAc...) asparagine glycan. The region spanning 347–382 is the EGF-like 1; calcium-binding domain; that stretch reads DFDDCQIWGICDQKCENRQGRHQCLCEEGYILERGQ. Cystine bridges form between cysteine 351/cysteine 361 and cysteine 357/cysteine 370. LDL-receptor class B repeat units lie at residues 435–477, 478–520, 521–567, and 568–612; these read HRVF…DWIN, NKLY…DPTV, GYLF…DLVS, and KRVY…FEEH. N-linked (GlcNAc...) asparagine glycosylation occurs at asparagine 462. Asparagine 657 carries an N-linked (GlcNAc...) asparagine glycan. 4 LDL-receptor class B repeats span residues 752 to 794, 795 to 836, 837 to 880, and 881 to 924; these read STVF…DWIS, RNLY…HPTA, GYMF…DWSA, and SRLY…FKDN. N-linked (GlcNAc...) asparagine glycosylation is present at asparagine 865. The 37-residue stretch at 1024 to 1060 folds into the LDL-receptor class A 8 domain; it reads QCGSLSFPCNNGKCVPSFFRCDGVDDCHDNSDEHQCG. Cystine bridges form between cysteine 1025-cysteine 1037, cysteine 1032-cysteine 1050, and cysteine 1044-cysteine 1059. N-linked (GlcNAc...) asparagine glycosylation occurs at asparagine 1063. LDL-receptor class A domains lie at 1065 to 1102, 1109 to 1145, 1149 to 1185, 1187 to 1224, 1230 to 1268, 1271 to 1307, and 1312 to 1350; these read TCSPSAFACVRGGQCIPGQWHCDRQNDCLDGSDEQNCP, TCPSTSFTCDNHVCIPKDWVCDTDNDCSDGSDEKNCQ, TCQPTQFRCPDHRCISPLYVCDGDKDCADGSDEAGCV, NCTSAQFKCADGSSCINSRYRCDGVYDCRDNSDEAGCP, MCHPDEFQCQGDGTCIPNTWECDGHPDCIHGSDEHTGCV, TCSPTHFLCDNGNCIYKAWICDGDNDCRDMSDEKDCP, and HCPSTQWQCPGYSTCINLSALCDGVFDCPNGTDESPLCN. Disulfide bonds link cysteine 1066–cysteine 1079, cysteine 1073–cysteine 1092, cysteine 1086–cysteine 1101, cysteine 1110–cysteine 1122, cysteine 1117–cysteine 1135, cysteine 1129–cysteine 1144, cysteine 1150–cysteine 1162, cysteine 1157–cysteine 1175, and cysteine 1169–cysteine 1184. Ca(2+)-binding residues include tryptophan 1127, aspartate 1130, aspartate 1132, aspartate 1134, aspartate 1140, and glutamate 1141. The N-linked (GlcNAc...) asparagine glycan is linked to asparagine 1187. Intrachain disulfides connect cysteine 1188-cysteine 1201, cysteine 1195-cysteine 1214, cysteine 1208-cysteine 1223, cysteine 1231-cysteine 1244, cysteine 1238-cysteine 1257, cysteine 1251-cysteine 1267, cysteine 1272-cysteine 1284, cysteine 1279-cysteine 1297, cysteine 1291-cysteine 1306, cysteine 1313-cysteine 1326, cysteine 1320-cysteine 1339, cysteine 1333-cysteine 1349, cysteine 1354-cysteine 1365, cysteine 1361-cysteine 1374, cysteine 1376-cysteine 1389, cysteine 1395-cysteine 1405, cysteine 1401-cysteine 1414, and cysteine 1416-cysteine 1429. Residues tyrosine 1206, aspartate 1209, valine 1211, aspartate 1213, aspartate 1219, and glutamate 1220 each contribute to the Ca(2+) site. Asparagine 1328 and asparagine 1341 each carry an N-linked (GlcNAc...) asparagine glycan. Positions 1350–1390 constitute an EGF-like 2 domain; that stretch reads NQDSCSHFNGGCTHQCMQGPFGATCLCPLGYQLANDTKTCE. Asparagine 1384 carries N-linked (GlcNAc...) asparagine glycosylation. Positions 1391-1430 constitute an EGF-like 3; calcium-binding domain; it reads DINECDIPGFCSQHCVNMRGSFRCACDPEYTLESDGRTCK. N-linked (GlcNAc...) asparagine glycans are attached at residues asparagine 1451, asparagine 1497, and asparagine 1551. 5 LDL-receptor class B repeats span residues 1479–1521, 1522–1564, 1567–1610, 1611–1655, and 1656–1696; these read GRVF…DWIG, RNLY…DPRM, NVMF…DYPN, RLIY…FEDF, and VYWT…IHPS. N-linked (GlcNAc...) asparagine glycans are attached at residues asparagine 1676, asparagine 1733, and asparagine 1811. 9 LDL-receptor class B repeats span residues 1791 to 1833, 1834 to 1883, 1884 to 1931, 1932 to 1973, 1974 to 2014, 2108 to 2157, 2158 to 2202, 2203 to 2246, and 2247 to 2290; these read QFIY…DWVS, RNIY…DPAR, GKLY…DIQE, QKLY…YGSF, LYYS…YHRR, GFIY…DWAA, GNLY…DPKH, RYLF…DHDT, and GYIY…FGES. N-linked (GlcNAc...) asparagine glycans are attached at residues asparagine 2134, asparagine 2178, and asparagine 2225. Asparagine 2396 carries N-linked (GlcNAc...) asparagine glycosylation. LDL-receptor class B repeat units lie at residues 2432–2478, 2479–2519, 2520–2563, 2564–2605, and 2606–2647; these read NRIF…DWIN, RRIY…DPCR, GYMY…DLET, DLLY…YGQY, and IYWT…VVKT. N-linked (GlcNAc...) asparagine glycans are attached at residues asparagine 2488 and asparagine 2548. LDL-receptor class A domains follow at residues 2700–2738, 2741–2777, 2780–2819, 2822–2861, 2864–2902, 2907–2946, 2949–2991, 2994–3030, 3033–3071, and 3076–3112; these read RCNQLQFTCLNGHCINQDWKCDNDNDCGDGSDELPTVCA, TCRSTAFTCGNGRCVPYHYRCDYYNDCGDNSDEAGCL, NCNSTTEFTCSNGRCIPLSYVCNGINNCHDNDTSDEKNCP, TCPPDFTKCQTTNICVPRAFLCDGDNDCGDGSDENPIYCA, TCRSNEFQCLSPQRCIPSYWFCDGEADCADGSDEPDTCG, TCRASQFQCDNGRCISGNWVCDGDNDCGDMSDEDQRHHCE, NCSS…QNCT, TCSAGEFSCANGRCVRQSFRCDRRNDCGDYSDERGCS, PCHANQFTCQNGRCIPRFFVCDEDNDCGDGSDEQEHLCH, and TCPLHQFRCDNGHCIEMGRVCNHVDDCSDNSDEKGCG. 18 cysteine pairs are disulfide-bonded: cysteine 2701/cysteine 2713, cysteine 2708/cysteine 2726, cysteine 2720/cysteine 2737, cysteine 2742/cysteine 2754, cysteine 2749/cysteine 2767, cysteine 2761/cysteine 2776, cysteine 2781/cysteine 2794, cysteine 2789/cysteine 2807, cysteine 2801/cysteine 2818, cysteine 2823/cysteine 2836, cysteine 2830/cysteine 2849, cysteine 2843/cysteine 2860, cysteine 2865/cysteine 2878, cysteine 2872/cysteine 2891, cysteine 2885/cysteine 2901, cysteine 2908/cysteine 2920, cysteine 2915/cysteine 2933, and cysteine 2927/cysteine 2945. An N-linked (GlcNAc...) asparagine glycan is attached at asparagine 2782. N-linked (GlcNAc...) asparagine glycosylation is present at asparagine 2810. Asparagine 2949 carries N-linked (GlcNAc...) asparagine glycosylation. 18 disulfides stabilise this stretch: cysteine 2950–cysteine 2967, cysteine 2957–cysteine 2980, cysteine 2974–cysteine 2990, cysteine 2995–cysteine 3007, cysteine 3002–cysteine 3020, cysteine 3014–cysteine 3029, cysteine 3034–cysteine 3046, cysteine 3041–cysteine 3059, cysteine 3053–cysteine 3070, cysteine 3077–cysteine 3089, cysteine 3084–cysteine 3102, cysteine 3096–cysteine 3111, cysteine 3116–cysteine 3128, cysteine 3124–cysteine 3137, cysteine 3139–cysteine 3152, cysteine 3158–cysteine 3169, cysteine 3165–cysteine 3178, and cysteine 3180–cysteine 3193. Asparagine 2989 carries an N-linked (GlcNAc...) asparagine glycan. One can recognise an EGF-like 4 domain in the interval 3112 to 3153; sequence GINECLDSSISRCDHNCTDTITSFYCSCLPGYKLMSDKRSCV. An N-linked (GlcNAc...) asparagine glycan is attached at asparagine 3127. The EGF-like 5; calcium-binding domain occupies 3154 to 3194; it reads DIDECKESPQLCSQKCENVVGSYICKCAPGYIREPDGKSCR. 4 N-linked (GlcNAc...) asparagine glycosylation sites follow: asparagine 3213, asparagine 3259, asparagine 3317, and asparagine 3357. LDL-receptor class B repeat units follow at residues 3241–3283, 3284–3326, 3335–3378, 3379–3421, and 3422–3462; these read KRLY…DWVS, RKLY…EHPR, GHVY…DYTN, DLLY…FEDT, and VFWT…YHPY. The N-linked (GlcNAc...) asparagine glycan is linked to asparagine 3448. LDL-receptor class A domains are found at residues 3513 to 3551, 3554 to 3592, 3595 to 3633, 3636 to 3674, 3679 to 3717, 3720 to 3757, 3760 to 3796, and 3799 to 3835; these read MCSSTQFLCGNNEKCIPIWWKCDGQKDCSDGSDEPDLCP, FCRLGQFQCRDGNCTSPQALCNARQDCADGSDEDRVLCE, RCESNEWQCANKRCIPQSWQCDSVNDCLDNSDEDTSHCA, TCRPGQFKCNNGRCIPQSWKCDVDNDCGDYSDEPIDECT, NCDNHTEFSCKTNYRCIPQWAVCNGFDDCRDNSDEQGCE, PCHPSGDFRCANHHCIPLRWKCDGTDDCGDNSDEENCV, ECSESEFRCADQQCIPSRWVCDQENDCGDNSDERDCE, and TCHPEHFQCTSGHCVPKALACDGRADCLDASDESACP. 24 disulfides stabilise this stretch: cysteine 3514–cysteine 3527, cysteine 3521–cysteine 3540, cysteine 3534–cysteine 3550, cysteine 3555–cysteine 3567, cysteine 3562–cysteine 3580, cysteine 3574–cysteine 3591, cysteine 3596–cysteine 3608, cysteine 3603–cysteine 3621, cysteine 3615–cysteine 3632, cysteine 3637–cysteine 3649, cysteine 3644–cysteine 3662, cysteine 3656–cysteine 3673, cysteine 3680–cysteine 3694, cysteine 3688–cysteine 3707, cysteine 3701–cysteine 3716, cysteine 3721–cysteine 3734, cysteine 3729–cysteine 3747, cysteine 3741–cysteine 3756, cysteine 3761–cysteine 3773, cysteine 3768–cysteine 3786, cysteine 3780–cysteine 3795, cysteine 3800–cysteine 3812, cysteine 3807–cysteine 3825, and cysteine 3819–cysteine 3834. The N-linked (GlcNAc...) asparagine glycan is linked to asparagine 3566. A glycan (N-linked (GlcNAc...) asparagine) is linked at asparagine 3682. Asparagine 3840 carries an N-linked (GlcNAc...) asparagine glycan. LDL-receptor class A domains follow at residues 3843–3881, 3884–3923, and 3929–3965; these read YCPAAMFECKNHVCIQSFWICDGENDCVDGSDEEIHLCF, PCESPQRFRCDNSRCVYGHQLCNGVDDCGDGSDEKEEHCR, and PCTDTEYKCSNGNCISQHYVCDNVNDCGDLSDETGCN. 9 cysteine pairs are disulfide-bonded: cysteine 3844-cysteine 3856, cysteine 3851-cysteine 3869, cysteine 3863-cysteine 3880, cysteine 3885-cysteine 3898, cysteine 3893-cysteine 3911, cysteine 3905-cysteine 3922, cysteine 3930-cysteine 3942, cysteine 3937-cysteine 3955, and cysteine 3949-cysteine 3964. Residues 3968-4003 enclose the EGF-like 6 domain; that stretch reads DNRTCAENICEQNCTQLSSGGFICSCRPGFKPSTSD. Asparagine 3969 and asparagine 3980 each carry an N-linked (GlcNAc...) asparagine glycan. 5 cysteine pairs are disulfide-bonded: cysteine 3972–cysteine 3981, cysteine 3977–cysteine 3991, cysteine 4013–cysteine 4023, cysteine 4019–cysteine 4032, and cysteine 4034–cysteine 4049. The 42-residue stretch at 4009-4050 folds into the EGF-like 7; calcium-binding domain; that stretch reads DINECEEFGICPQSCRNSKGSYECFCVDGFKSMSTHYGERCA. N-linked (GlcNAc...) asparagine glycosylation is present at asparagine 4070. LDL-receptor class B repeat units lie at residues 4156 to 4198, 4199 to 4242, and 4244 to 4285; these read RHIY…NPKL, GLMF…DYLN, and DRVY…FEDK. N-linked (GlcNAc...) asparagine glycosylation occurs at asparagine 4329. An EGF-like 8 domain is found at 4379–4413; it reads MPPPCRCMHGGNCYFDENELPKCKCSSGYSGEYCE. Intrachain disulfides connect cysteine 4383/cysteine 4391, cysteine 4385/cysteine 4401, and cysteine 4403/cysteine 4412. A helical membrane pass occupies residues 4426–4446; that stretch reads MAVLLTFVIVIIVGALVLVGL. At 4447 to 4660 the chain is on the cytoplasmic side; the sequence is FHYRKTGSLL…ANLVKEDSDV (214 aa). Residues 4454 to 4463 carry the SH3-binding motif; that stretch reads SLLPTLPKLP. Residues 4457–4462 carry the PxLPxI/L motif 1; mediates interaction with ANKRA2 motif; it reads PTLPKL. Positions 4460–4465 match the PxLPxI/L motif 2; mediates interaction with ANKRA2 motif; that stretch reads PKLPSL. Phosphoserine is present on residues serine 4464 and serine 4467. The Endocytosis signal signature appears at 4522-4527; that stretch reads FENPMY. Residues 4559–4582 form a disordered region; sequence NYGRPIDPSEIVPEPKPASPGADE. At serine 4577 the chain carries Phosphoserine. An interaction with DAB2 region spans residues 4597 to 4610; sequence QTTNFENPIYAEMD. The NPXY motif motif lies at 4603–4606; the sequence is NPIY. The SH2-binding motif lies at 4606–4609; that stretch reads YAEM. Residues 4617–4660 form a disordered region; the sequence is VAVAPPPSPSLPAKASKRNLTPGYTATEDTFKDTANLVKEDSDV. An SH3-binding motif is present at residues 4619–4630; sequence VAPPPSPSLPAK. A Phosphoserine modification is found at serine 4624. Residues 4634–4644 are compositionally biased toward polar residues; it reads RNLTPGYTATE. At threonine 4637 the chain carries Phosphothreonine. Phosphoserine is present on serine 4658.

Belongs to the LDLR family. In terms of assembly, binds plasminogen, extracellular matrix components, plasminogen activator-plasminogen activator inhibitor type I complex, apolipoprotein E-enriched beta-VLDL, lipoprotein lipase, lactoferrin, CLU/clusterin and calcium. Forms a multimeric complex together with LRPAP1. Interacts (via PxLPxI/L motif) with ANKRA2 (via ankyrin repeats). Interacts with LRP2BP. Interacts (via NPXY motif) with DAB2; the interaction is not affected by tyrosine phosphorylation of the NPXY motif. Interacts with MB. Interacts with BMP4. Interacts with the Sonic hedgehog protein N-product which is the active product of SHH. Interacts with CST3 in a calcium-dependent manner. Interacts with the vitamin-D binding protein GC/DBP. Interacts with sex hormone-binding protein SHBG. Interacts with angiotensin-2. Also interacts with angiotensin 1-7. Interacts with APOM. Interacts with selenoprotein SEPP1. Interacts with LEP. Interacts with ALB. Interacts with the antiapoptotic protein BIRC5/survivin. Interacts with matrix metalloproteinase MMP2 in complex with metalloproteinase inhibitor TIMP1. In neurons, forms a trimeric complex with APP and APPB1/FE65. Interacts with LDLRAP1/ARH; mediates trafficking of LRP2 to the endocytic recycling compartment. Does not interact with beta-amyloid protein 40 alone but interacts with the complex composed of beta-amyloid protein 40 and CLU/APOJ. Interacts with MDK. Post-translationally, a fraction undergoes proteolytic cleavage of the extracellular domain at the cell membrane to generate a cytoplasmic tail fragment. This is internalized into the early endosome from where it trafficks in an LDLRAP1/ARH-dependent manner to the endocytic recycling compartment (ERC). In the ERC, it is further cleaved by gamma-secretase to release a fragment which translocates to the nucleus and mediates transcriptional repression. In terms of processing, N-glycosylation is required for ligand binding. In the inner ear, expressed in the lumen of the endolymphatic sac where it localizes to macrophage-like cells as well as to mitochondria-rich and ribosome-rich epithelial cells (at protein level). In the inner ear, expressed in marginal cells of the stria vascularis, epithelial cells at the spiral prominence, epithelial cells of Reissner's membrane facing the cochlear duct, and Kolliker's organ (at protein level). Expressed in the choroid plexus epithelium in the brain (at protein level). In the brain, also expressed in astrocytes (at protein level). Expression also detected in epithelial cells of the kidney glomerulus and proximal tubule, lung, epididymis and yolk sac.

It is found in the apical cell membrane. Its subcellular location is the endosome lumen. The protein localises to the membrane. It localises to the clathrin-coated pit. The protein resides in the cell projection. It is found in the dendrite. Its subcellular location is the axon. Functionally, multiligand endocytic receptor. Acts together with CUBN to mediate endocytosis of high-density lipoproteins. Mediates receptor-mediated uptake of polybasic drugs such as aprotinin, aminoglycosides and polymyxin B. In the kidney, mediates the tubular uptake and clearance of leptin. Also mediates transport of leptin across the blood-brain barrier through endocytosis at the choroid plexus epithelium. Endocytosis of leptin in neuronal cells is required for hypothalamic leptin signaling and leptin-mediated regulation of feeding and body weight. Mediates endocytosis and subsequent lysosomal degradation of CST3 in kidney proximal tubule cells. Mediates renal uptake of 25-hydroxyvitamin D3 in complex with the vitamin D3 transporter GC/DBP. Mediates renal uptake of metallothionein-bound heavy metals. Together with CUBN, mediates renal reabsorption of myoglobin. Mediates renal uptake and subsequent lysosomal degradation of APOM. Plays a role in kidney selenium homeostasis by mediating renal endocytosis of selenoprotein SEPP1. Mediates renal uptake of the antiapoptotic protein BIRC5/survivin which may be important for functional integrity of the kidney. Mediates renal uptake of matrix metalloproteinase MMP2 in complex with metalloproteinase inhibitor TIMP1. Mediates endocytosis of Sonic hedgehog protein N-product (ShhN), the active product of SHH. Also mediates ShhN transcytosis. In the embryonic neuroepithelium, mediates endocytic uptake and degradation of BMP4, is required for correct SHH localization in the ventral neural tube and plays a role in patterning of the ventral telencephalon. Required at the onset of neurulation to sequester SHH on the apical surface of neuroepithelial cells of the rostral diencephalon ventral midline and to control PTCH1-dependent uptake and intracellular trafficking of SHH. During neurulation, required in neuroepithelial cells for uptake of folate bound to the folate receptor FOLR1 which is necessary for neural tube closure. In the adult brain, negatively regulates BMP signaling in the subependymal zone which enables neurogenesis to proceed. In astrocytes, mediates endocytosis of ALB which is required for the synthesis of the neurotrophic factor oleic acid. Involved in neurite branching. During optic nerve development, required for SHH-mediated migration and proliferation of oligodendrocyte precursor cells. Mediates endocytic uptake and clearance of SHH in the retinal margin which protects retinal progenitor cells from mitogenic stimuli and keeps them quiescent. Plays a role in reproductive organ development by mediating uptake in reproductive tissues of androgen and estrogen bound to the sex hormone binding protein SHBG. Mediates endocytosis of angiotensin-2. Also mediates endocytosis of angiotensin 1-7. Binds to the complex composed of beta-amyloid protein 40 and CLU/APOJ and mediates its endocytosis and lysosomal degradation. Required for embryonic heart development. Required for normal hearing, possibly through interaction with estrogen in the inner ear. This Rattus norvegicus (Rat) protein is Low-density lipoprotein receptor-related protein 2 (Lrp2).